We begin with the raw amino-acid sequence, 68 residues long: Serine rich endogenous peptide 13 (68 aa).

The first 31 residues, 1–31 (MATKASNLVVFLLSLLLLFLLISFQVGVADA), serve as a signal peptide directing secretion. The tract at residues 33–68 (RNKRQGQEQRVDYDYPRPPTAPIYLPPSKSRKGKGP) is disordered. The segment covering 37 to 47 (QGQEQRVDYDY) has biased composition (basic and acidic residues). The segment covering 48–57 (PRPPTAPIYL) has biased composition (pro residues). The SCOOP motif motif lies at 54–68 (PIYLPPSKSRKGKGP). The SxS motif essential for MIK2 binding motif lies at 60 to 62 (SKS).

This sequence belongs to the serine rich endogenous peptide (SCOOP) phytocytokine family. Interacts with MIK2 (via extracellular leucine-rich repeat domain); this interaction triggers the formation of complex between MIK2 and the BAK1/SERK3 and SERK4 coreceptors, and subsequent BAK1 activation by phosphorylation. As to expression, mostly expressed in stems and flowers and, to a lower extent, in seedlings shoots, roots, siliques, seeds and leaves.

It localises to the cell membrane. The protein resides in the secreted. It is found in the extracellular space. Its subcellular location is the apoplast. Functionally, brassicaceae-specific phytocytokine (plant endogenous peptide released into the apoplast) perceived by MIK2 in a BAK1/SERK3 and SERK4 coreceptors-dependent manner, that modulates various physiological and antimicrobial processes including growth prevention and reactive oxygen species (ROS) response regulation. Promotes the expression of immune-related marker genes (e.g. WRKY30, WRKY33 and CYP81F2) in a MIK2-dependent manner. Inhibits root growth and regulates root meristems. Prevents general growth and development. Exhibits antibacterial effects against Pseudomonas syringae pv. tomato DC3000, Ralstonia solanacearum, Bacillus subtilis and Agrobacterium tumefaciens, thus being an antimicrobial peptide (AMP). This chain is Serine rich endogenous peptide 13, found in Arabidopsis thaliana (Mouse-ear cress).